Reading from the N-terminus, the 398-residue chain is Cell division protein FtsZ (398 aa).

GTP-binding positions include 24 to 28, 111 to 113, Glu154, Arg158, and Asp202; these read GAGGN and GTG. Residues 333-381 are disordered; that stretch reads GRNNKSETSPISQSEDSEKEKFKWPYSQSESTQDKTLETKPAEQVSEGA. Positions 364-373 are enriched in basic and acidic residues; sequence TQDKTLETKP.

This sequence belongs to the FtsZ family. Homodimer. Polymerizes to form a dynamic ring structure in a strictly GTP-dependent manner. Interacts directly with several other division proteins.

Its subcellular location is the cytoplasm. Essential cell division protein that forms a contractile ring structure (Z ring) at the future cell division site. The regulation of the ring assembly controls the timing and the location of cell division. One of the functions of the FtsZ ring is to recruit other cell division proteins to the septum to produce a new cell wall between the dividing cells. Binds GTP and shows GTPase activity. The sequence is that of Cell division protein FtsZ from Wolbachia sp.